We begin with the raw amino-acid sequence, 329 residues long: GTPase Obg (329 aa).

Residues Tyr-2 to Val-160 form the Obg domain. An OBG-type G domain is found at Ala-161–Lys-327. Residues Gly-167–Ser-174, Phe-192–Ile-196, Asp-213–Gly-216, Asn-280–Asp-283, and Ser-308–Tyr-310 each bind GTP. Ser-174 and Thr-194 together coordinate Mg(2+).

Belongs to the TRAFAC class OBG-HflX-like GTPase superfamily. OBG GTPase family. Monomer. It depends on Mg(2+) as a cofactor.

It is found in the cytoplasm. In terms of biological role, an essential GTPase which binds GTP, GDP and possibly (p)ppGpp with moderate affinity, with high nucleotide exchange rates and a fairly low GTP hydrolysis rate. Plays a role in control of the cell cycle, stress response, ribosome biogenesis and in those bacteria that undergo differentiation, in morphogenesis control. This Borrelia garinii subsp. bavariensis (strain ATCC BAA-2496 / DSM 23469 / PBi) (Borreliella bavariensis) protein is GTPase Obg.